The sequence spans 150 residues: Ribosomal RNA large subunit methyltransferase H (150 aa).

S-adenosyl-L-methionine is bound by residues Ala-100 and 118–123; that span reads LSEMTF.

It belongs to the RNA methyltransferase RlmH family. In terms of assembly, homodimer.

The protein localises to the cytoplasm. The enzyme catalyses pseudouridine(1915) in 23S rRNA + S-adenosyl-L-methionine = N(3)-methylpseudouridine(1915) in 23S rRNA + S-adenosyl-L-homocysteine + H(+). Functionally, specifically methylates the pseudouridine at position 1915 (m3Psi1915) in 23S rRNA. In Helicobacter pylori (strain ATCC 700392 / 26695) (Campylobacter pylori), this protein is Ribosomal RNA large subunit methyltransferase H.